The following is a 538-amino-acid chain: Eukaryotic translation initiation factor 3 subunit L (538 aa).

The region spanning 305-513 (TFSDILLYIQ…IHIADTKVSH (209 aa)) is the PCI domain.

It belongs to the eIF-3 subunit L family. Component of the eukaryotic translation initiation factor 3 (eIF-3) complex. The eIF-3 complex interacts with pix.

It localises to the cytoplasm. Its function is as follows. Component of the eukaryotic translation initiation factor 3 (eIF-3) complex, which is involved in protein synthesis of a specialized repertoire of mRNAs and, together with other initiation factors, stimulates binding of mRNA and methionyl-tRNAi to the 40S ribosome. The eIF-3 complex specifically targets and initiates translation of a subset of mRNAs involved in cell proliferation. In Drosophila virilis (Fruit fly), this protein is Eukaryotic translation initiation factor 3 subunit L.